An 822-amino-acid polypeptide reads, in one-letter code: MTQMASAGGDTSADNVGAHGGRTVAPVPYELTEAAGPLDRAELAALDAWWRAANYLSVGQIYLMANPLLTEPLRPEHIKPRLLGHFGTVPGLNLVWTHANRVIRQRGLDAVFVAGPGHGGPGPNACAWLEGTYSELYSHIPRDGEGMAALFAQFSFPGGVPSHCAPETPGSFHEGGELGYSLLHAYGAALDNPDLTVFCVIGDGEAETGPLATSWHGNKFLNPGRDGAVLPILALNEYKIANPTLFARIPEPELINLLEGYGHEPIVVAGDDPGVVHQRLAAAMDTCMNRIAQIQRAARDGADGSRPAWPMIVLRTPKGWTCPPVVDGDRVEGTFRAHQVPLPAARTDDGHRAVLEQWLRSYRPEELFDDRGRPVPELLALAPEGDRRMSANPVANGGALVRDLRLPDWREFGVEVKTPGGSTHEATRVLGGWLREVTRLNPHNFLTFAPDELASNRLQDILEVTGRDWQAEVGEYDVALDRSGRVIEVLSEHICQGLLEGYLLTGRHGVFTCYEAFIHIVDAMFNQHAKWLDASAAVPWRRPLASLNYLLSSHVWRQDHNGFTHQDPGFLDVVLNKKPEIVRVYLPPDANTLLSTYDHCLRSRHYVNVVVAGKQPQEDWLSVEQAAVHCARGLGIWEWACHNDDPGTTPDVVLACAGDVPTLETLAAAAILRDRLPRLRVRVINVVDLMRLLPAEEHPHGLPDREFDTLFTTASPIIFAFHGYPWLIHRLTYRRTNHDGLHVRGYKEEGTTTTPFDMVMLNDLDRYHLVMDVIDRVPGLRETAAGLRQEMVDARWRARAWTREHGADIPVVADWTWPEPSR.

This sequence belongs to the XFP family. The cofactor is thiamine diphosphate.

The protein is Probable phosphoketolase of Nocardia farcinica (strain IFM 10152).